Consider the following 295-residue polypeptide: Probable ketoamine kinase slr1563 (295 aa).

ATP is bound at residue 99 to 101; that stretch reads EWL. Asp201 (proton acceptor) is an active-site residue.

It belongs to the fructosamine kinase family.

Its function is as follows. Ketoamine kinase that phosphorylates ketoamines on the third carbon of the sugar moiety to generate ketoamine 3-phosphate. The chain is Probable ketoamine kinase slr1563 from Synechocystis sp. (strain ATCC 27184 / PCC 6803 / Kazusa).